Consider the following 434-residue polypeptide: 3-phosphoshikimate 1-carboxyvinyltransferase (434 aa).

3 residues coordinate 3-phosphoshikimate: K22, S23, and R27. Residue K22 participates in phosphoenolpyruvate binding. Phosphoenolpyruvate-binding residues include G93 and R121. 6 residues coordinate 3-phosphoshikimate: S168, S169, Q170, S199, D320, and K347. Q170 serves as a coordination point for phosphoenolpyruvate. Residue D320 is the Proton acceptor of the active site. 3 residues coordinate phosphoenolpyruvate: R351, R394, and K419.

The protein belongs to the EPSP synthase family. As to quaternary structure, monomer.

It is found in the cytoplasm. It carries out the reaction 3-phosphoshikimate + phosphoenolpyruvate = 5-O-(1-carboxyvinyl)-3-phosphoshikimate + phosphate. Its pathway is metabolic intermediate biosynthesis; chorismate biosynthesis; chorismate from D-erythrose 4-phosphate and phosphoenolpyruvate: step 6/7. Catalyzes the transfer of the enolpyruvyl moiety of phosphoenolpyruvate (PEP) to the 5-hydroxyl of shikimate-3-phosphate (S3P) to produce enolpyruvyl shikimate-3-phosphate and inorganic phosphate. In Burkholderia ambifaria (strain ATCC BAA-244 / DSM 16087 / CCUG 44356 / LMG 19182 / AMMD) (Burkholderia cepacia (strain AMMD)), this protein is 3-phosphoshikimate 1-carboxyvinyltransferase.